We begin with the raw amino-acid sequence, 203 residues long: Large ribosomal subunit protein bL25 (203 aa).

The protein belongs to the bacterial ribosomal protein bL25 family. CTC subfamily. As to quaternary structure, part of the 50S ribosomal subunit; part of the 5S rRNA/L5/L18/L25 subcomplex. Contacts the 5S rRNA. Binds to the 5S rRNA independently of L5 and L18.

Its function is as follows. This is one of the proteins that binds to the 5S RNA in the ribosome where it forms part of the central protuberance. This Dechloromonas aromatica (strain RCB) protein is Large ribosomal subunit protein bL25.